A 216-amino-acid chain; its full sequence is Cytidylate kinase (216 aa).

Residue 11–19 (GPAGAGKGT) coordinates ATP.

Belongs to the cytidylate kinase family. Type 1 subfamily.

Its subcellular location is the cytoplasm. The enzyme catalyses CMP + ATP = CDP + ADP. The catalysed reaction is dCMP + ATP = dCDP + ADP. The polypeptide is Cytidylate kinase (Mesorhizobium japonicum (strain LMG 29417 / CECT 9101 / MAFF 303099) (Mesorhizobium loti (strain MAFF 303099))).